Consider the following 211-residue polypeptide: Protein-methionine-sulfoxide reductase heme-binding subunit MsrQ (211 aa).

5 consecutive transmembrane segments (helical) span residues 17–37, 82–102, 116–136, 153–173, and 178–198; these read LAGL…GLGA, LWCF…ELGV, PYLT…FTST, FVYL…KIIS, and IYAG…LSLF.

This sequence belongs to the MsrQ family. Heterodimer of a catalytic subunit (MsrP) and a heme-binding subunit (MsrQ). FMN serves as cofactor. Requires heme b as cofactor.

It localises to the cell inner membrane. Functionally, part of the MsrPQ system that repairs oxidized periplasmic proteins containing methionine sulfoxide residues (Met-O), using respiratory chain electrons. Thus protects these proteins from oxidative-stress damage caused by reactive species of oxygen and chlorine generated by the host defense mechanisms. MsrPQ is essential for the maintenance of envelope integrity under bleach stress, rescuing a wide series of structurally unrelated periplasmic proteins from methionine oxidation, including the primary periplasmic chaperone SurA and the lipoprotein Pal. MsrQ provides electrons for reduction to the reductase catalytic subunit MsrP, using the quinone pool of the respiratory chain. The sequence is that of Protein-methionine-sulfoxide reductase heme-binding subunit MsrQ from Shigella boydii serotype 4 (strain Sb227).